We begin with the raw amino-acid sequence, 209 residues long: Large ribosomal subunit protein uL3 (209 aa).

The protein belongs to the universal ribosomal protein uL3 family. Part of the 50S ribosomal subunit. Forms a cluster with proteins L14 and L19.

Its function is as follows. One of the primary rRNA binding proteins, it binds directly near the 3'-end of the 23S rRNA, where it nucleates assembly of the 50S subunit. The polypeptide is Large ribosomal subunit protein uL3 (Moorella thermoacetica (strain ATCC 39073 / JCM 9320)).